The chain runs to 237 residues: Ribosomal RNA small subunit methyltransferase G (237 aa).

S-adenosyl-L-methionine contacts are provided by residues Gly76, Phe81, 128–129 (VE), and Arg147.

It belongs to the methyltransferase superfamily. RNA methyltransferase RsmG family.

It is found in the cytoplasm. Specifically methylates the N7 position of a guanine in 16S rRNA. The sequence is that of Ribosomal RNA small subunit methyltransferase G from Prochlorococcus marinus (strain MIT 9215).